The primary structure comprises 341 residues: tRNA N6-adenosine threonylcarbamoyltransferase (341 aa).

2 residues coordinate Fe cation: H115 and H119. Substrate contacts are provided by residues 138 to 142, D171, G184, D188, and N279; that span reads VVSGG. D307 contributes to the Fe cation binding site.

This sequence belongs to the KAE1 / TsaD family. Requires Fe(2+) as cofactor.

The protein localises to the cytoplasm. It catalyses the reaction L-threonylcarbamoyladenylate + adenosine(37) in tRNA = N(6)-L-threonylcarbamoyladenosine(37) in tRNA + AMP + H(+). Required for the formation of a threonylcarbamoyl group on adenosine at position 37 (t(6)A37) in tRNAs that read codons beginning with adenine. Is involved in the transfer of the threonylcarbamoyl moiety of threonylcarbamoyl-AMP (TC-AMP) to the N6 group of A37, together with TsaE and TsaB. TsaD likely plays a direct catalytic role in this reaction. The protein is tRNA N6-adenosine threonylcarbamoyltransferase of Clostridium novyi (strain NT).